A 256-amino-acid polypeptide reads, in one-letter code: Ubiquinone/menaquinone biosynthesis C-methyltransferase UbiE (256 aa).

Positions 78 and 99 each coordinate S-adenosyl-L-methionine.

The protein belongs to the class I-like SAM-binding methyltransferase superfamily. MenG/UbiE family.

The catalysed reaction is a 2-demethylmenaquinol + S-adenosyl-L-methionine = a menaquinol + S-adenosyl-L-homocysteine + H(+). The enzyme catalyses a 2-methoxy-6-(all-trans-polyprenyl)benzene-1,4-diol + S-adenosyl-L-methionine = a 5-methoxy-2-methyl-3-(all-trans-polyprenyl)benzene-1,4-diol + S-adenosyl-L-homocysteine + H(+). Its pathway is quinol/quinone metabolism; menaquinone biosynthesis; menaquinol from 1,4-dihydroxy-2-naphthoate: step 2/2. The protein operates within cofactor biosynthesis; ubiquinone biosynthesis. Methyltransferase required for the conversion of demethylmenaquinol (DMKH2) to menaquinol (MKH2) and the conversion of 2-polyprenyl-6-methoxy-1,4-benzoquinol (DDMQH2) to 2-polyprenyl-3-methyl-6-methoxy-1,4-benzoquinol (DMQH2). The chain is Ubiquinone/menaquinone biosynthesis C-methyltransferase UbiE from Geobacter sulfurreducens (strain ATCC 51573 / DSM 12127 / PCA).